Consider the following 375-residue polypeptide: Putative nuclease YhcG (375 aa).

In terms of assembly, interacts with DNA processing enzymes, including the restriction complex HsdMRS, the integrases IntF and IntS, and the recombinase PinE.

May be a nuclease involved in DNA recombination and repair. The chain is Putative nuclease YhcG (yhcG) from Escherichia coli (strain K12).